The following is a 699-amino-acid chain: Sarcoplasmic reticulum histidine-rich calcium-binding protein (699 aa).

Residues 1–28 form the signal peptide; it reads MGHHRPWLHASVLWAGVASLLLPPAMTQ. Residues 50–95 are disordered; that stretch reads SEEASAELRHHLHSPRDHPDENKDVSTENGHHFWSHPDREKEDEDV. Residues 55 to 89 are compositionally biased toward basic and acidic residues; sequence AELRHHLHSPRDHPDENKDVSTENGHHFWSHPDRE. T76 is modified (phosphothreonine; by FAM20C). A run of 10 repeats spans residues 106–121, 134–154, 155–177, 180–213, 214–237, 238–270, 271–294, 295–318, 319–342, and 343–365. A 6 X approximate tandem repeats region spans residues 106–342; it reads HRSQDHKVGD…SGEHHHHVPD (237 aa). The segment at 106–365 is 4 X tandem repeats, acidic; it reads HRSQDHKVGD…DVSTERWHQG (260 aa). Residues S119 and S145 each carry the phosphoserine; by FAM20C modification. The tract at residues 127-617 is disordered; the sequence is HGGQARGHRG…EDTGPQDAQE (491 aa). Composition is skewed to basic residues over residues 148-158 and 173-183; these read HRHHLPSHRSH and HHHHILRHGHR. Positions 187 to 206 are enriched in acidic residues; the sequence is GEDDEGEEEEEEEEEEEEAS. Positions 231–241 are enriched in basic residues; the sequence is HHHHGPSHRHQ. The span at 244 to 263 shows a compositional bias: acidic residues; sequence EEDDDDDDDDDDDDDDDDVS. The segment covering 288-298 has biased composition (basic residues); it reads HHHRDPSHRHR. The span at 302–311 shows a compositional bias: acidic residues; that stretch reads EDDNDDDDVS. Over residues 324 to 335 the composition is skewed to basic and acidic residues; the sequence is HRKEEVEAVSGE. S333 carries the post-translational modification Phosphoserine. Positions 336–347 are enriched in basic residues; it reads HHHHVPDHRHQG. Phosphoserine; by FAM20C occurs at positions 358 and 431. Composition is skewed to basic and acidic residues over residues 444-463 and 470-481; these read SHQDEETGHGQRGSIKEMSH and VVKDRSHLRKDD. Residue S494 is modified to Phosphoserine; by FAM20C. Basic and acidic residues predominate over residues 504–515; sequence QGEKGTHHGSRD. Acidic residues-rich tracts occupy residues 532–551 and 567–581; these read QEEEEEEDKEEEEEEEDEER and SEEEEEEEEGLEEDE. A Phosphoserine; by FAM20C modification is found at S567. Residues 627-673 form a metal-binding region; it reads CGYCSFCNRCTECESCHCDEENMGEHCDQCQHCQFCYLCPLVCETVC.

The protein belongs to the HRC family.

Its subcellular location is the sarcoplasmic reticulum lumen. Functionally, may play a role in the regulation of calcium sequestration or release in the SR of skeletal and cardiac muscle. In Homo sapiens (Human), this protein is Sarcoplasmic reticulum histidine-rich calcium-binding protein (HRC).